A 720-amino-acid chain; its full sequence is Polyribonucleotide nucleotidyltransferase (720 aa).

Residues Asp-487 and Asp-493 each coordinate Mg(2+). The region spanning Pro-554–Ile-613 is the KH domain. An S1 motif domain is found at Gly-623 to Lys-691. The tract at residues Ala-692 to Glu-720 is disordered. Basic and acidic residues predominate over residues Leu-701 to Glu-720.

The protein belongs to the polyribonucleotide nucleotidyltransferase family. The cofactor is Mg(2+).

It is found in the cytoplasm. The enzyme catalyses RNA(n+1) + phosphate = RNA(n) + a ribonucleoside 5'-diphosphate. Involved in mRNA degradation. Catalyzes the phosphorolysis of single-stranded polyribonucleotides processively in the 3'- to 5'-direction. The polypeptide is Polyribonucleotide nucleotidyltransferase (Bradyrhizobium sp. (strain BTAi1 / ATCC BAA-1182)).